The sequence spans 692 residues: Methionine--tRNA ligase (692 aa).

The 'HIGH' region signature appears at 26–36 (PYANGSIHLGH). The Zn(2+) site is built by Cys157, Cys160, Cys170, and Cys173. Positions 342–346 (KMSKS) match the 'KMSKS' region motif. Residue Lys345 participates in ATP binding. Positions 590 to 692 (DFAKVDLRIA…SGAQPGMRVK (103 aa)) constitute a tRNA-binding domain.

This sequence belongs to the class-I aminoacyl-tRNA synthetase family. MetG type 1 subfamily. Homodimer. It depends on Zn(2+) as a cofactor.

The protein localises to the cytoplasm. It catalyses the reaction tRNA(Met) + L-methionine + ATP = L-methionyl-tRNA(Met) + AMP + diphosphate. In terms of biological role, is required not only for elongation of protein synthesis but also for the initiation of all mRNA translation through initiator tRNA(fMet) aminoacylation. The protein is Methionine--tRNA ligase of Methylobacillus flagellatus (strain ATCC 51484 / DSM 6875 / VKM B-1610 / KT).